The following is a 53-amino-acid chain: Antilisterial bacteriocin subtilosin biosynthesis protein AlbB (53 aa).

2 consecutive transmembrane segments (helical) span residues 8–28 (ILLYILSFIFVIGAVVYFVKS) and 30–50 (YLFTLIFIAIAILFGMRARKA).

The protein resides in the cell membrane. Its function is as follows. Involved in the production of the bacteriocin subtilosin. Required for maximal production and for optimal immunity to subtilosin. This is Antilisterial bacteriocin subtilosin biosynthesis protein AlbB (albB) from Bacillus subtilis (strain 168).